Consider the following 305-residue polypeptide: MIKQRTLKQSIKVTGVGLHSGNKVTLKLRPAPINTGIVYCRTDLTPPVYFPADATAVRDTMLCTALVNDQGVRISTVEHLNSALAGLGLDNVIIEVDAPEVPIMDGSASPFVYLLLDAGIEEQDAAKKFIRVKQKIRVEDGDKWAEISPYNGFRLNFTIDFNHPAISKNLSNYTLEFSAQKFVQQISRARTFAFMKDIEYLQSQGLALGGSLDNAIVLDNYRVLNEDGLRFKDELVRHKMLDAIGDLFMAGYNILGDFKAYKSGHGLNNKLLRALLANQEAWEFVTFEDKEKVPQGYAIPSQVLI.

Residues His-79, His-238, and Asp-242 each contribute to the Zn(2+) site. His-265 serves as the catalytic Proton donor.

Belongs to the LpxC family. It depends on Zn(2+) as a cofactor.

The catalysed reaction is a UDP-3-O-[(3R)-3-hydroxyacyl]-N-acetyl-alpha-D-glucosamine + H2O = a UDP-3-O-[(3R)-3-hydroxyacyl]-alpha-D-glucosamine + acetate. It functions in the pathway glycolipid biosynthesis; lipid IV(A) biosynthesis; lipid IV(A) from (3R)-3-hydroxytetradecanoyl-[acyl-carrier-protein] and UDP-N-acetyl-alpha-D-glucosamine: step 2/6. Catalyzes the hydrolysis of UDP-3-O-myristoyl-N-acetylglucosamine to form UDP-3-O-myristoylglucosamine and acetate, the committed step in lipid A biosynthesis. This Mannheimia succiniciproducens (strain KCTC 0769BP / MBEL55E) protein is UDP-3-O-acyl-N-acetylglucosamine deacetylase.